The sequence spans 154 residues: Urease accessory protein UreE (154 aa).

Belongs to the UreE family.

The protein localises to the cytoplasm. In terms of biological role, involved in urease metallocenter assembly. Binds nickel. Probably functions as a nickel donor during metallocenter assembly. In Escherichia coli O157:H7, this protein is Urease accessory protein UreE.